A 162-amino-acid chain; its full sequence is Beta-lactoglobulin-1 (162 aa).

Intrachain disulfides connect cysteine 66–cysteine 160 and cysteine 106–cysteine 119.

It belongs to the calycin superfamily. Lipocalin family. Monomer. As to expression, synthesized in mammary gland and secreted in milk.

It is found in the secreted. Primary component of whey, it binds retinol and is probably involved in the transport of that molecule. This is Beta-lactoglobulin-1 (LGB1) from Equus asinus (Donkey).